The primary structure comprises 243 residues: Cysteine-rich secretory protein 2 (243 aa).

The first 21 residues, 1–21 (MALLPVLFLVTVLLPSLPAEG), serve as a signal peptide directing secretion. The SCP domain occupies 41-169 (VNKHNELRKA…SLKYYYVCQY (129 aa)). 5 disulfides stabilise this stretch: Cys-189-Cys-196, Cys-192-Cys-201, Cys-205-Cys-238, Cys-214-Cys-232, and Cys-223-Cys-236. The region spanning 205-238 (CQYQDLLSNCDSLKNTAGCEHELLKEKCKATCLC) is the ShKT domain.

Belongs to the CRISP family. As to quaternary structure, interacts with NSUN4 isoform 3. Testis and epididymis.

It localises to the secreted. May regulate some ion channels' activity and thereby regulate calcium fluxes during sperm capacitation. The sequence is that of Cysteine-rich secretory protein 2 (CRISP2) from Homo sapiens (Human).